The sequence spans 616 residues: GPI mannosyltransferase 3 (616 aa).

Topologically, residues 1–16 (MAHEVHRIKPKLGRTQ) are cytoplasmic. The helical transmembrane segment at 17–37 (IFWVFLAFRVLNAVLTRTFFQ) threads the bilayer. Residues 38 to 86 (ADEFWQALEPAHWKAFKYGELTWEWKFGVRSYLFPMIFELTYRLVSLSS) are Lumenal-facing. Residues 87–107 (ILLHYALLLLSTIGSDLLILL) traverse the membrane as a helical segment. At 108–136 (LPKYELSWQVAEDLKRLPFDVTRSFEYYG) the chain is on the cytoplasmic side. A helical membrane pass occupies residues 137–157 (VIYAPKIVMAVLASIGEYYIV). Residues 158 to 188 (RFVQKLYLLTLDKRNEKEEEERRSGLSEITK) are Lumenal-facing. The helical transmembrane segment at 189 to 209 (FALLLSLTNFFNCFFITRTFI) threads the bilayer. At 210 to 240 (NSFEMILTSIALYYWDWTGGQMIKESSFTKS) the chain is on the cytoplasmic side. A helical transmembrane segment spans residues 241–261 (LIFAFLACLQRPSSGLIWVIP). Topologically, residues 262–278 (SISLILNLVGKKQYHLL) are lumenal. A helical transmembrane segment spans residues 279 to 299 (FITFSKVLRSFFLVFTANAII). Residues 300–338 (DMYFYEKVTFPFFRFLKFNFTTPLSKFYGVAPWHFHFFQ) lie on the Cytoplasmic side of the membrane. A helical membrane pass occupies residues 339–359 (SLPIVLGASIPAFAFGLFFPL). Residues 360-392 (SKRSFPKKYLNPFFQVKLTILLNLLVYSTLPHK) are Lumenal-facing. The helical transmembrane segment at 393 to 413 (EFRFIFPLQPLFILISSFGLL) threads the bilayer. Residues 414 to 423 (RLDRDYWKRL) are Cytoplasmic-facing. The chain crosses the membrane as a helical span at residues 424–444 (SGLKSLLWLVPFVSVFIALLL). Topologically, residues 445 to 616 (DTFHESGSIE…DYSDIPAADI (172 aa)) are lumenal.

Belongs to the glycosyltransferase 22 family. PIGB subfamily.

It localises to the endoplasmic reticulum membrane. It functions in the pathway glycolipid biosynthesis; glycosylphosphatidylinositol-anchor biosynthesis. Mannosyltransferase involved in glycosylphosphatidylinositol-anchor biosynthesis. Transfers the third mannose to Man2-GlcN-acyl-PI during GPI precursor assembly. The chain is GPI mannosyltransferase 3 (GPI10) from Saccharomyces cerevisiae (strain ATCC 204508 / S288c) (Baker's yeast).